We begin with the raw amino-acid sequence, 65 residues long: Large ribosomal subunit protein bL32 (65 aa).

Belongs to the bacterial ribosomal protein bL32 family.

In Metamycoplasma arthritidis (strain 158L3-1) (Mycoplasma arthritidis), this protein is Large ribosomal subunit protein bL32.